The following is a 629-amino-acid chain: 1-deoxy-D-xylulose-5-phosphate synthase (629 aa).

Residues histidine 72 and 113–115 contribute to the thiamine diphosphate site; that span reads GHA. Residue aspartate 144 participates in Mg(2+) binding. Residues 145–146, asparagine 174, tyrosine 287, and glutamate 370 contribute to the thiamine diphosphate site; that span reads GA. Asparagine 174 is a Mg(2+) binding site.

Belongs to the transketolase family. DXPS subfamily. As to quaternary structure, homodimer. The cofactor is Mg(2+). It depends on thiamine diphosphate as a cofactor.

It carries out the reaction D-glyceraldehyde 3-phosphate + pyruvate + H(+) = 1-deoxy-D-xylulose 5-phosphate + CO2. It participates in metabolic intermediate biosynthesis; 1-deoxy-D-xylulose 5-phosphate biosynthesis; 1-deoxy-D-xylulose 5-phosphate from D-glyceraldehyde 3-phosphate and pyruvate: step 1/1. Its function is as follows. Catalyzes the acyloin condensation reaction between C atoms 2 and 3 of pyruvate and glyceraldehyde 3-phosphate to yield 1-deoxy-D-xylulose-5-phosphate (DXP). The sequence is that of 1-deoxy-D-xylulose-5-phosphate synthase from Prochlorococcus marinus (strain MIT 9215).